A 1722-amino-acid chain; its full sequence is Signal-induced proliferation-associated 1-like protein 2 (1722 aa).

Disordered stretches follow at residues 1-29 (MSDPRPSQAEKHKLGRAAAKLKDPSRTMQ) and 44-72 (SMGPATLNTSSSSEGGGGGGGPANGTPAV). The span at 57–66 (EGGGGGGGPA) shows a compositional bias: gly residues. Residues Ser-149, Ser-380, and Ser-384 each carry the phosphoserine modification. Residues 362-405 (ASAASQTPVPVGPAGGCESPLGSKEDLNSKENPDADEGDGKSND) form a disordered region. The span at 384-403 (SKEDLNSKENPDADEGDGKS) shows a compositional bias: basic and acidic residues. One can recognise a Rap-GAP domain in the interval 596–813 (LLKLDEQGLS…RTRQEYLKDL (218 aa)). One can recognise a PDZ domain in the interval 951 to 1027 (EMTLRRNGLG…VKVVIIQPHE (77 aa)). The residue at position 1030 (Ser-1030) is a Phosphoserine. 2 disordered regions span residues 1068–1246 (HRVP…FGSG) and 1331–1360 (GSMGDLSEVSSHSSGSQHSGSPSAHCSKST). Low complexity-rich tracts occupy residues 1091-1103 (LQCQPLLQQAQAA) and 1120-1131 (SSPSNQSSSSDP). A compositionally biased stretch (basic and acidic residues) spans 1195 to 1218 (YKERVLQKDGSCKESPNKLSHIGD). Low complexity predominate over residues 1220 to 1237 (SCSSHSSSNTLSSNTSSN). Ser-1245 bears the Phosphoserine mark. The segment covering 1331 to 1355 (GSMGDLSEVSSHSSGSQHSGSPSAH) has biased composition (low complexity). Ser-1461, Ser-1472, Ser-1478, Ser-1488, Ser-1549, Ser-1552, and Ser-1591 each carry phosphoserine. The stretch at 1652-1712 (STLTGKVNQL…ATAQLRKFTE (61 aa)) forms a coiled coil.

The sequence is that of Signal-induced proliferation-associated 1-like protein 2 (Sipa1l2) from Mus musculus (Mouse).